Here is a 765-residue protein sequence, read N- to C-terminus: FHF complex subunit HOOK interacting protein 2A (765 aa).

2 stretches are compositionally biased toward polar residues: residues 200–209 (LSTDTGQSCQ) and 538–550 (NTLS…SSSP). Disordered stretches follow at residues 200 to 234 (LSTD…QMGD) and 538 to 562 (NTLS…TDGK).

It belongs to the FHIP family.

Functionally, may be required for proper functioning of the nervous system. This chain is FHF complex subunit HOOK interacting protein 2A (FHIP2A), found in Bos taurus (Bovine).